A 266-amino-acid polypeptide reads, in one-letter code: Auxin-responsive protein IAA21 (266 aa).

Positions 24 to 28 (LRLGL) match the EAR-like (transcriptional repression) motif. The segment at 27-50 (GLPGTAEEAESEGGGGGGTDAAPL) is disordered. Residues 146-248 (CLYVKVSMDG…SCRRLRIMKG (103 aa)) enclose the PB1 domain.

The protein belongs to the Aux/IAA family. Homodimers and heterodimers. Highly expressed in flowers. Expressed in roots and seedlings.

It is found in the nucleus. Functionally, aux/IAA proteins are short-lived transcriptional factors that function as repressors of early auxin response genes at low auxin concentrations. This chain is Auxin-responsive protein IAA21 (IAA21), found in Oryza sativa subsp. japonica (Rice).